Reading from the N-terminus, the 207-residue chain is Outer-membrane lipoprotein LolB (207 aa).

Positions 1–23 are cleaved as a signal peptide; that stretch reads MPTMNRSRRLALLCLGAPLLLAA. Residue C24 is the site of N-palmitoyl cysteine attachment. C24 is lipidated: S-diacylglycerol cysteine. Positions 171–207 are disordered; that stretch reads PSASQAPAPRPRRIDLEREGGPTPLAVKLVIDPEEAP.

Belongs to the LolB family. Monomer.

The protein resides in the cell outer membrane. Plays a critical role in the incorporation of lipoproteins in the outer membrane after they are released by the LolA protein. This chain is Outer-membrane lipoprotein LolB, found in Cupriavidus pinatubonensis (strain JMP 134 / LMG 1197) (Cupriavidus necator (strain JMP 134)).